Reading from the N-terminus, the 195-residue chain is Putative NADH dehydrogenase/NAD(P)H nitroreductase CC_0061 (195 aa).

It belongs to the nitroreductase family. HadB/RutE subfamily. FMN is required as a cofactor.

The chain is Putative NADH dehydrogenase/NAD(P)H nitroreductase CC_0061 from Caulobacter vibrioides (strain ATCC 19089 / CIP 103742 / CB 15) (Caulobacter crescentus).